A 535-amino-acid chain; its full sequence is E3 ubiquitin-protein ligase rnf168 (535 aa).

The RING-type zinc finger occupies 16-55; that stretch reads CPICQEILLEPVTLPCKHTLCNPCFQMTVEKASLCCPFCR. Residues 112–130 carry the LR motif 1 motif; that stretch reads LCKPGEIRQEYEAEVSKIE. Residues 145–153 carry the UMI motif motif; it reads EDYIQKLLA. 2 consecutive short sequence motifs (MIU motif) follow at residues 170–193 and 406–429; these read IEEQLKRDEELARLLSGDMDLSNA and RRKQEEHDRLFALQLQRELDKELK. Over residues 429–443 the composition is skewed to basic and acidic residues; the sequence is KQVNRGKGSPDEYQL. Residues 429–535 are disordered; it reads KQVNRGKGSP…LDLFQRSAGK (107 aa). The short motif at 433-444 is the LR motif 2 element; sequence RGKGSPDEYQLR. Composition is skewed to polar residues over residues 462–478 and 492–507; these read NEQTPVQDKGGNTQSGY and ITSSQVRQSRAVTNTE.

The protein belongs to the RNF168 family. Monomer.

It is found in the nucleus. The enzyme catalyses S-ubiquitinyl-[E2 ubiquitin-conjugating enzyme]-L-cysteine + [acceptor protein]-L-lysine = [E2 ubiquitin-conjugating enzyme]-L-cysteine + N(6)-ubiquitinyl-[acceptor protein]-L-lysine.. It functions in the pathway protein modification; protein ubiquitination. Its function is as follows. E3 ubiquitin-protein ligase required for accumulation of repair proteins to sites of DNA damage. Acts with ube2n/ubc13 to amplify the rnf8-dependent histone ubiquitination. Recruited to sites of DNA damage at double-strand breaks (DSBs) by binding to ubiquitinated histone H2A and ubiquitinates histone H2A and H2AX, leading to amplify the rnf8-dependent H2A ubiquitination and promoting the formation of 'Lys-63'-linked ubiquitin conjugates. This leads to concentrate ubiquitinated histones H2A and H2AX at DNA lesions to the threshold required for recruitment of tp53bp1 and brca1. Catalyzes monoubiquitination of 'Lys-13' and 'Lys-15' of nucleosomal histone H2A (H2AK13Ub and H2AK15Ub, respectively). This Xenopus tropicalis (Western clawed frog) protein is E3 ubiquitin-protein ligase rnf168.